A 489-amino-acid chain; its full sequence is MKKTIISTLVIGLVSGCSNTNLLKDNLASEQSVINLSKSSNEAKSRNIEFLSGAYLSERKVPKHDIKFSGKYVEFESKSPIELIDVLDGLSKQYNIQYVFSDELEDENSEENKKSSGSSSAKKIKYSGPLAGFFDYLSSAYNMHFEFGHNNLVKAYHYKNQVFNLQQYFDDNKFSSSMQIGGTSGTSSGLKGTADTAIESNSWEKIDEFLSASLGETGKFTIFEDYSLVTVKARPDKFLLLHTFFDKLINESKMQIAVDYRVVSLSEERLNQLAAKFGIENAGKYSITSDMVDAISLSQVGGGLGASYRSASARLDAVVNELSQEVMHEGHFIGIPNRVMPLNVTTNSKYISSIETTKDTNTDEETRTVKVSDLVTGFSMMVMPKILDDGRIQISSGFSRKQLVSIGTAQGITLPTVDENESMNTVTMNPGEVRLAMLFKDNYIQNSNGVQLLGGGTENKKSARYIAVLVGASSYKTNDLASNRVNIYD.

The first 16 residues, 1–16 (MKKTIISTLVIGLVSG), serve as a signal peptide directing secretion. A lipid anchor (N-palmitoyl cysteine) is attached at Cys17. A lipid anchor (S-diacylglycerol cysteine) is attached at Cys17. Transmembrane regions (helical) follow at residues 174–190 (FSSSMQIGGTSGTSSGL), 294–308 (AISLSQVGGGLGASY), 402–417 (QLVSIGTAQGITLPTV), and 442–457 (NYIQNSNGVQLLGGGT).

The protein resides in the cell membrane. Involved in TCP pilus biogenesis. This is Toxin coregulated pilus biosynthesis outer membrane protein C (tcpC) from Vibrio cholerae serotype O1 (strain ATCC 39315 / El Tor Inaba N16961).